A 1080-amino-acid chain; its full sequence is Carbamoyl phosphate synthase large chain (1080 aa).

The interval methionine 1–glutamate 403 is carboxyphosphate synthetic domain. ATP contacts are provided by arginine 129, arginine 169, glycine 175, glycine 176, glutamate 208, valine 210, glutamate 215, glycine 241, valine 242, histidine 243, glutamine 285, and glutamate 299. The ATP-grasp 1 domain occupies arginine 133 to valine 328. Mg(2+) contacts are provided by glutamine 285, glutamate 299, and asparagine 301. Positions 285, 299, and 301 each coordinate Mn(2+). Positions threonine 404–alanine 554 are oligomerization domain. Residues alanine 555–aspartate 942 are carbamoyl phosphate synthetic domain. Positions glutamine 679–threonine 876 constitute an ATP-grasp 2 domain. ATP is bound by residues arginine 715, arginine 754, leucine 756, glutamate 761, glycine 787, valine 788, histidine 789, serine 790, glutamine 830, and glutamate 847. Mg(2+) is bound by residues glutamine 830, glutamate 847, and asparagine 849. Residues glutamine 830, glutamate 847, and asparagine 849 each contribute to the Mn(2+) site. In terms of domain architecture, MGS-like spans isoleucine 943–valine 1080. The interval isoleucine 943–valine 1080 is allosteric domain.

The protein belongs to the CarB family. Composed of two chains; the small (or glutamine) chain promotes the hydrolysis of glutamine to ammonia, which is used by the large (or ammonia) chain to synthesize carbamoyl phosphate. Tetramer of heterodimers (alpha,beta)4. The cofactor is Mg(2+). Requires Mn(2+) as cofactor.

The enzyme catalyses hydrogencarbonate + L-glutamine + 2 ATP + H2O = carbamoyl phosphate + L-glutamate + 2 ADP + phosphate + 2 H(+). It catalyses the reaction hydrogencarbonate + NH4(+) + 2 ATP = carbamoyl phosphate + 2 ADP + phosphate + 2 H(+). The protein operates within amino-acid biosynthesis; L-arginine biosynthesis; carbamoyl phosphate from bicarbonate: step 1/1. It participates in pyrimidine metabolism; UMP biosynthesis via de novo pathway; (S)-dihydroorotate from bicarbonate: step 1/3. In terms of biological role, large subunit of the glutamine-dependent carbamoyl phosphate synthetase (CPSase). CPSase catalyzes the formation of carbamoyl phosphate from the ammonia moiety of glutamine, carbonate, and phosphate donated by ATP, constituting the first step of 2 biosynthetic pathways, one leading to arginine and/or urea and the other to pyrimidine nucleotides. The large subunit (synthetase) binds the substrates ammonia (free or transferred from glutamine from the small subunit), hydrogencarbonate and ATP and carries out an ATP-coupled ligase reaction, activating hydrogencarbonate by forming carboxy phosphate which reacts with ammonia to form carbamoyl phosphate. The chain is Carbamoyl phosphate synthase large chain from Xylella fastidiosa (strain Temecula1 / ATCC 700964).